A 453-amino-acid chain; its full sequence is Ribulose bisphosphate carboxylase large chain (453 aa).

Residues 1 to 2 (MS) constitute a propeptide that is removed on maturation. Pro3 is subject to N-acetylproline. Lys14 is modified (N6,N6,N6-trimethyllysine). Residues Asn123 and Thr173 each coordinate substrate. The active-site Proton acceptor is the Lys175. Lys177 lines the substrate pocket. Mg(2+) is bound by residues Lys201, Asp203, and Glu204. Lys201 is subject to N6-carboxylysine. The Proton acceptor role is filled by His294. Substrate contacts are provided by Arg295, His327, and Ser379.

The protein belongs to the RuBisCO large chain family. Type I subfamily. Heterohexadecamer of 8 large chains and 8 small chains; disulfide-linked. The disulfide link is formed within the large subunit homodimers. Mg(2+) is required as a cofactor. Post-translationally, the disulfide bond which can form in the large chain dimeric partners within the hexadecamer appears to be associated with oxidative stress and protein turnover.

The protein localises to the plastid. It is found in the chloroplast. The catalysed reaction is 2 (2R)-3-phosphoglycerate + 2 H(+) = D-ribulose 1,5-bisphosphate + CO2 + H2O. The enzyme catalyses D-ribulose 1,5-bisphosphate + O2 = 2-phosphoglycolate + (2R)-3-phosphoglycerate + 2 H(+). In terms of biological role, ruBisCO catalyzes two reactions: the carboxylation of D-ribulose 1,5-bisphosphate, the primary event in carbon dioxide fixation, as well as the oxidative fragmentation of the pentose substrate in the photorespiration process. Both reactions occur simultaneously and in competition at the same active site. The sequence is that of Ribulose bisphosphate carboxylase large chain from Galium lucidum.